Reading from the N-terminus, the 118-residue chain is NADH-quinone oxidoreductase subunit A 2 (118 aa).

The next 3 helical transmembrane spans lie at Y5–F25, L62–V82, and L87–V107.

The protein belongs to the complex I subunit 3 family. NDH-1 is composed of 14 different subunits. Subunits NuoA, H, J, K, L, M, N constitute the membrane sector of the complex.

It is found in the cell inner membrane. It carries out the reaction a quinone + NADH + 5 H(+)(in) = a quinol + NAD(+) + 4 H(+)(out). Its function is as follows. NDH-1 shuttles electrons from NADH, via FMN and iron-sulfur (Fe-S) centers, to quinones in the respiratory chain. The immediate electron acceptor for the enzyme in this species is believed to be ubiquinone. Couples the redox reaction to proton translocation (for every two electrons transferred, four hydrogen ions are translocated across the cytoplasmic membrane), and thus conserves the redox energy in a proton gradient. The sequence is that of NADH-quinone oxidoreductase subunit A 2 from Citrifermentans bemidjiense (strain ATCC BAA-1014 / DSM 16622 / JCM 12645 / Bem) (Geobacter bemidjiensis).